Reading from the N-terminus, the 100-residue chain is NADH-quinone oxidoreductase subunit K (100 aa).

The next 3 helical transmembrane spans lie at 3-23, 29-49, and 63-83; these read PTAY…IGVL, IMIF…LVAF, and FIVM…IVAI.

It belongs to the complex I subunit 4L family. As to quaternary structure, NDH-1 is composed of 15 different subunits. Subunits NuoA, H, J, K, L, M, N constitute the membrane sector of the complex.

The protein localises to the cell membrane. It catalyses the reaction a quinone + NADH + 5 H(+)(in) = a quinol + NAD(+) + 4 H(+)(out). Functionally, NDH-1 shuttles electrons from NADH, via FMN and iron-sulfur (Fe-S) centers, to quinones in the respiratory chain. The immediate electron acceptor for the enzyme in this species is believed to be a menaquinone. Couples the redox reaction to proton translocation (for every two electrons transferred, four hydrogen ions are translocated across the cytoplasmic membrane), and thus conserves the redox energy in a proton gradient. The polypeptide is NADH-quinone oxidoreductase subunit K (Deinococcus geothermalis (strain DSM 11300 / CIP 105573 / AG-3a)).